Reading from the N-terminus, the 107-residue chain is Small ribosomal subunit protein uS10c (107 aa).

It belongs to the universal ribosomal protein uS10 family. In terms of assembly, part of the 30S ribosomal subunit.

The protein localises to the plastid. It localises to the chloroplast. In terms of biological role, involved in the binding of tRNA to the ribosomes. The polypeptide is Small ribosomal subunit protein uS10c (Thalassiosira pseudonana (Marine diatom)).